The primary structure comprises 172 residues: Protein-export protein SecB (172 aa).

Belongs to the SecB family. Homotetramer, a dimer of dimers. One homotetramer interacts with 1 SecA dimer.

The protein localises to the cytoplasm. In terms of biological role, one of the proteins required for the normal export of preproteins out of the cell cytoplasm. It is a molecular chaperone that binds to a subset of precursor proteins, maintaining them in a translocation-competent state. It also specifically binds to its receptor SecA. This Bordetella avium (strain 197N) protein is Protein-export protein SecB.